The chain runs to 178 residues: PEST proteolytic signal-containing nuclear protein (178 aa).

Residues methionine 1–glutamine 15 are compositionally biased toward basic and acidic residues. Positions methionine 1 to serine 84 are disordered. At alanine 2 the chain carries N-acetylalanine. The span at serine 37–arginine 47 shows a compositional bias: low complexity. Serine 53 bears the Phosphoserine mark. Position 64 is an N6-acetyllysine (lysine 64). Phosphoserine is present on residues serine 77, serine 87, and serine 119. The tract at residues asparagine 134 to asparagine 178 is disordered. Threonine 139 carries the phosphothreonine modification. Residues threonine 139–asparagine 149 show a composition bias toward polar residues. At serine 147 the chain carries Phosphoserine. An N6-acetyllysine mark is found at lysine 150 and lysine 152. Over residues lysine 160–asparagine 178 the composition is skewed to basic and acidic residues.

As to quaternary structure, interacts with UHRF2/NIRF. In terms of processing, ubiquitinated; mediated by UHRF2 and leading to its subsequent proteasomal degradation. Post-translationally, N-terminally acetylated in a HYPK-dependent manner by the NatA acetyltransferase complex which is composed of NAA10 and NAA15.

The protein resides in the nucleus. May be involved in cell cycle regulation. The chain is PEST proteolytic signal-containing nuclear protein (PCNP) from Pongo abelii (Sumatran orangutan).